We begin with the raw amino-acid sequence, 732 residues long: uncharacterized protein (732 aa).

The interval 145-207 (ETLRDSVINP…RRRPEMASPH (63 aa)) is disordered. Residues 170–179 (KGHETLERGS) are compositionally biased toward basic and acidic residues. A Reverse transcriptase domain is found at 176–524 (ERGSKALGPE…KKIPFLGYLI (349 aa)).

It localises to the mitochondrion. This is an uncharacterized protein from Marchantia polymorpha (Common liverwort).